The sequence spans 202 residues: Peptide deformylase (202 aa).

Residues 1 to 24 (MAGSFAQLAKNAEKKKPSISVSKE) are disordered. Fe cation-binding residues include cysteine 121 and histidine 163. Glutamate 164 is an active-site residue. Position 167 (histidine 167) interacts with Fe cation.

Belongs to the polypeptide deformylase family. Fe(2+) is required as a cofactor.

The enzyme catalyses N-terminal N-formyl-L-methionyl-[peptide] + H2O = N-terminal L-methionyl-[peptide] + formate. Its function is as follows. Removes the formyl group from the N-terminal Met of newly synthesized proteins. Requires at least a dipeptide for an efficient rate of reaction. N-terminal L-methionine is a prerequisite for activity but the enzyme has broad specificity at other positions. The chain is Peptide deformylase from Prochlorococcus marinus (strain NATL1A).